The sequence spans 456 residues: Bestrophin homolog 18 (456 aa).

The next 4 helical transmembrane spans lie at 29-49 (WSAIWIQYSVWLGLYFLVSAI), 83-103 (GFFIAGVLRRFWYLYDIIGFI), 234-254 (IIYPTIVCLAVHMYFFVGILA), and 267-287 (MIDLVFPFMTSIQFVFYMGWL). Residues 416 to 456 (ASSSRSLERQRSPGSFRMETLTPGSPTNTPIEPIDKIDKKK) are disordered.

The protein belongs to the anion channel-forming bestrophin (TC 1.A.46) family. Calcium-sensitive chloride channel subfamily. As to quaternary structure, forms oligomers.

The protein localises to the cell membrane. Functionally, forms chloride channels. The polypeptide is Bestrophin homolog 18 (best-18) (Caenorhabditis elegans).